A 232-amino-acid chain; its full sequence is Ribonuclease 3 (232 aa).

The 130-residue stretch at 5–134 (QTVLKNHFAI…FLGALLLDKD (130 aa)) folds into the RNase III domain. Mg(2+) is bound at residue Glu-47. Asp-51 is a catalytic residue. Residues Asp-120 and Glu-123 each coordinate Mg(2+). Glu-123 is an active-site residue. A DRBM domain is found at 160–229 (DYKTHLQELL…AKNAVEKGLD (70 aa)).

It belongs to the ribonuclease III family. Homodimer. The cofactor is Mg(2+).

It is found in the cytoplasm. The catalysed reaction is Endonucleolytic cleavage to 5'-phosphomonoester.. In terms of biological role, digests double-stranded RNA. Involved in the processing of primary rRNA transcript to yield the immediate precursors to the large and small rRNAs (23S and 16S). Processes some mRNAs, and tRNAs when they are encoded in the rRNA operon. Processes pre-crRNA and tracrRNA of type II CRISPR loci if present in the organism. The protein is Ribonuclease 3 of Streptococcus pneumoniae (strain Hungary19A-6).